A 326-amino-acid chain; its full sequence is Delta-aminolevulinic acid dehydratase (326 aa).

Zn(2+) is bound by residues cysteine 125, cysteine 127, and cysteine 135. The active-site Schiff-base intermediate with substrate is the lysine 200. Positions 210 and 222 each coordinate 5-aminolevulinate. Glutamate 238 is a binding site for Mg(2+). Lysine 253 functions as the Schiff-base intermediate with substrate in the catalytic mechanism. Serine 279 provides a ligand contact to 5-aminolevulinate.

The protein belongs to the ALAD family. Homooctamer. Zn(2+) serves as cofactor.

The enzyme catalyses 2 5-aminolevulinate = porphobilinogen + 2 H2O + H(+). Its pathway is porphyrin-containing compound metabolism; protoporphyrin-IX biosynthesis; coproporphyrinogen-III from 5-aminolevulinate: step 1/4. Its function is as follows. Catalyzes an early step in the biosynthesis of tetrapyrroles. Binds two molecules of 5-aminolevulinate per subunit, each at a distinct site, and catalyzes their condensation to form porphobilinogen. The chain is Delta-aminolevulinic acid dehydratase (hemB) from Methanothermobacter thermautotrophicus (strain ATCC 29096 / DSM 1053 / JCM 10044 / NBRC 100330 / Delta H) (Methanobacterium thermoautotrophicum).